The chain runs to 532 residues: Muscarinic acetylcholine receptor M5 (532 aa).

At 1 to 29 the chain is on the extracellular side; sequence MEGDSYHNATTVNGTPVNHQPLERHRLWE. Asn8 carries N-linked (GlcNAc...) asparagine glycosylation. A helical membrane pass occupies residues 30-53; sequence VITIAAVTAVVSLITIVGNVLVMI. Residues 54–66 are Cytoplasmic-facing; the sequence is SFKVNSQLKTVNN. Residues 67–87 traverse the membrane as a helical segment; it reads YYLLSLACADLIIGIFSMNLY. Residues 88–104 lie on the Extracellular side of the membrane; the sequence is TTYILMGRWALGSLACD. Cys103 and Cys183 are joined by a disulfide. The helical transmembrane segment at 105 to 126 threads the bilayer; it reads LWLALDYVASNASVMNLLVISF. The Cytoplasmic segment spans residues 127–146; it reads DRYFSITRPLTYRAKRTPKR. Residues 147 to 169 form a helical membrane-spanning segment; sequence AGIMIGLAWLISFILWAPAILCW. Over 170 to 191 the chain is Extracellular; the sequence is QYLVGKRTVPLDECQIQFLSEP. Residues 192 to 214 form a helical membrane-spanning segment; the sequence is TITFGTAIAAFYIPVSVMTILYC. Over 215–443 the chain is Cytoplasmic; it reads RIYRETEKRT…LVKERKAAQT (229 aa). Residues 262–294 form a disordered region; that stretch reads AQRERNQASWSSSRRSTSTTGKPSQATGPSANW. Residues 270-281 are compositionally biased toward low complexity; that stretch reads SWSSSRRSTSTT. Residues 282–291 show a composition bias toward polar residues; it reads GKPSQATGPS. The chain crosses the membrane as a helical span at residues 444–464; the sequence is LSAILLAFIITWTPYNIMVLV. Over 465–478 the chain is Extracellular; the sequence is STFCDKCVPVTLWH. A helical membrane pass occupies residues 479 to 498; that stretch reads LGYWLCYVNSTVNPICYALC. The Cytoplasmic portion of the chain corresponds to 499-532; the sequence is NRTFRKTFKMLLLCRWKKKKVEEKLYWQGNSKLP. Residues Thr501 and Thr505 each carry the phosphothreonine modification.

It belongs to the G-protein coupled receptor 1 family. Muscarinic acetylcholine receptor subfamily. CHRM5 sub-subfamily.

The protein resides in the cell membrane. It is found in the postsynaptic cell membrane. Its function is as follows. The muscarinic acetylcholine receptor mediates various cellular responses, including inhibition of adenylate cyclase, breakdown of phosphoinositides and modulation of potassium channels through the action of G proteins. Primary transducing effect is Pi turnover. The sequence is that of Muscarinic acetylcholine receptor M5 (CHRM5) from Homo sapiens (Human).